We begin with the raw amino-acid sequence, 328 residues long: Malate dehydrogenase (328 aa).

An NAD(+)-binding site is contributed by 11–17 (GAAGQIG). Positions 92 and 98 each coordinate substrate. Residues Asn105, Gln112, and 129 to 131 (TGN) each bind NAD(+). Substrate-binding residues include Asn131 and Arg162. His187 acts as the Proton acceptor in catalysis.

The protein belongs to the LDH/MDH superfamily. MDH type 2 family.

It catalyses the reaction (S)-malate + NAD(+) = oxaloacetate + NADH + H(+). In terms of biological role, catalyzes the reversible oxidation of malate to oxaloacetate. The sequence is that of Malate dehydrogenase from Paenarthrobacter aurescens (strain TC1).